We begin with the raw amino-acid sequence, 130 residues long: DNA-directed RNA polymerase subunit omega (130 aa).

The segment at 109 to 130 is disordered; it reads EEELLKGLEGLAPPEEQPEEDE.

The protein belongs to the RNA polymerase subunit omega family. As to quaternary structure, the RNAP catalytic core consists of 2 alpha, 1 beta, 1 beta' and 1 omega subunit. When a sigma factor is associated with the core the holoenzyme is formed, which can initiate transcription.

The enzyme catalyses RNA(n) + a ribonucleoside 5'-triphosphate = RNA(n+1) + diphosphate. Promotes RNA polymerase assembly. Latches the N- and C-terminal regions of the beta' subunit thereby facilitating its interaction with the beta and alpha subunits. In Rhodopseudomonas palustris (strain BisB5), this protein is DNA-directed RNA polymerase subunit omega.